We begin with the raw amino-acid sequence, 172 residues long: Crossover junction endodeoxyribonuclease RuvC (172 aa).

Active-site residues include D7, E68, and D140. Mg(2+) contacts are provided by D7, E68, and D140.

This sequence belongs to the RuvC family. As to quaternary structure, homodimer which binds Holliday junction (HJ) DNA. The HJ becomes 2-fold symmetrical on binding to RuvC with unstacked arms; it has a different conformation from HJ DNA in complex with RuvA. In the full resolvosome a probable DNA-RuvA(4)-RuvB(12)-RuvC(2) complex forms which resolves the HJ. Mg(2+) serves as cofactor.

Its subcellular location is the cytoplasm. The catalysed reaction is Endonucleolytic cleavage at a junction such as a reciprocal single-stranded crossover between two homologous DNA duplexes (Holliday junction).. The RuvA-RuvB-RuvC complex processes Holliday junction (HJ) DNA during genetic recombination and DNA repair. Endonuclease that resolves HJ intermediates. Cleaves cruciform DNA by making single-stranded nicks across the HJ at symmetrical positions within the homologous arms, yielding a 5'-phosphate and a 3'-hydroxyl group; requires a central core of homology in the junction. The consensus cleavage sequence is 5'-(A/T)TT(C/G)-3'. Cleavage occurs on the 3'-side of the TT dinucleotide at the point of strand exchange. HJ branch migration catalyzed by RuvA-RuvB allows RuvC to scan DNA until it finds its consensus sequence, where it cleaves and resolves the cruciform DNA. The sequence is that of Crossover junction endodeoxyribonuclease RuvC from Polynucleobacter asymbioticus (strain DSM 18221 / CIP 109841 / QLW-P1DMWA-1) (Polynucleobacter necessarius subsp. asymbioticus).